The primary structure comprises 74 residues: Sec-independent protein translocase protein TatA (74 aa).

Residues 1–21 form a helical membrane-spanning segment; sequence MGGISIWNLVIIVLLVVLLFG. The interval 51 to 74 is disordered; it reads AEFEKVEQKTAESTEQKAKEKEQA.

This sequence belongs to the TatA/E family. As to quaternary structure, the Tat system comprises two distinct complexes: a TatABC complex, containing multiple copies of TatA, TatB and TatC subunits, and a separate TatA complex, containing only TatA subunits. Substrates initially bind to the TatABC complex, which probably triggers association of the separate TatA complex to form the active translocon.

The protein resides in the cell inner membrane. Functionally, part of the twin-arginine translocation (Tat) system that transports large folded proteins containing a characteristic twin-arginine motif in their signal peptide across membranes. TatA could form the protein-conducting channel of the Tat system. The protein is Sec-independent protein translocase protein TatA of Glaesserella parasuis serovar 5 (strain SH0165) (Haemophilus parasuis).